The chain runs to 248 residues: Anamorsin homolog (248 aa).

Residues 4-129 form an N-terminal SAM-like domain region; that stretch reads FKGLQKSLYI…ETGSSARLSF (126 aa). The linker stretch occupies residues 130–161; the sequence is AKKNASAINVWKISGDDEELIDEEELLDEEDK. C172, C181, C184, and C186 together coordinate [2Fe-2S] cluster. Positions 172–186 are fe-S binding site A; that stretch reads CSTTGKRKACKNCSC. C209, C212, C220, and C223 together coordinate [4Fe-4S] cluster. Short sequence motifs (cx2C motif) lie at residues 209 to 212 and 220 to 223; these read CGNC and CSTC. The fe-S binding site B stretch occupies residues 209 to 223; sequence CGNCYLGDAFRCSTC.

Belongs to the anamorsin family. Monomer. [2Fe-2S] cluster is required as a cofactor. The cofactor is [4Fe-4S] cluster.

Its subcellular location is the cytoplasm. It localises to the mitochondrion intermembrane space. Functionally, component of the cytosolic iron-sulfur (Fe-S) protein assembly (CIA) machinery. Required for the maturation of extramitochondrial Fe-S proteins. Part of an electron transfer chain functioning in an early step of cytosolic Fe-S biogenesis, facilitating the de novo assembly of a [4Fe-4S] cluster on the cytosolic Fe-S scaffold complex. Electrons are transferred from NADPH via a FAD- and FMN-containing diflavin oxidoreductase. Together with the diflavin oxidoreductase, also required for the assembly of the diferric tyrosyl radical cofactor of ribonucleotide reductase (RNR), probably by providing electrons for reduction during radical cofactor maturation in the catalytic small subunit. The sequence is that of Anamorsin homolog from Drosophila erecta (Fruit fly).